The chain runs to 1188 residues: DNA-directed RNA polymerase subunit beta (1188 aa).

Belongs to the RNA polymerase beta chain family. In terms of assembly, the RNAP catalytic core consists of 2 alpha, 1 beta, 1 beta' and 1 omega subunit. When a sigma factor is associated with the core the holoenzyme is formed, which can initiate transcription.

The enzyme catalyses RNA(n) + a ribonucleoside 5'-triphosphate = RNA(n+1) + diphosphate. Functionally, DNA-dependent RNA polymerase catalyzes the transcription of DNA into RNA using the four ribonucleoside triphosphates as substrates. In Streptococcus gordonii (strain Challis / ATCC 35105 / BCRC 15272 / CH1 / DL1 / V288), this protein is DNA-directed RNA polymerase subunit beta.